A 344-amino-acid polypeptide reads, in one-letter code: Methionine import ATP-binding protein MetN 1 (344 aa).

The ABC transporter domain maps to 2 to 241; the sequence is IELRNLSQRF…PHHEVTRALI (240 aa). 38–45 serves as a coordination point for ATP; it reads GRSGAGKS.

Belongs to the ABC transporter superfamily. Methionine importer (TC 3.A.1.24) family. The complex is composed of two ATP-binding proteins (MetN), two transmembrane proteins (MetI) and a solute-binding protein (MetQ).

It localises to the cell inner membrane. It catalyses the reaction L-methionine(out) + ATP + H2O = L-methionine(in) + ADP + phosphate + H(+). The catalysed reaction is D-methionine(out) + ATP + H2O = D-methionine(in) + ADP + phosphate + H(+). Functionally, part of the ABC transporter complex MetNIQ involved in methionine import. Responsible for energy coupling to the transport system. The chain is Methionine import ATP-binding protein MetN 1 from Burkholderia lata (strain ATCC 17760 / DSM 23089 / LMG 22485 / NCIMB 9086 / R18194 / 383).